A 302-amino-acid chain; its full sequence is Sulfate adenylyltransferase subunit 2 (302 aa).

Belongs to the PAPS reductase family. CysD subfamily. In terms of assembly, heterodimer composed of CysD, the smaller subunit, and CysN.

It catalyses the reaction sulfate + ATP + H(+) = adenosine 5'-phosphosulfate + diphosphate. It functions in the pathway sulfur metabolism; hydrogen sulfide biosynthesis; sulfite from sulfate: step 1/3. With CysN forms the ATP sulfurylase (ATPS) that catalyzes the adenylation of sulfate producing adenosine 5'-phosphosulfate (APS) and diphosphate, the first enzymatic step in sulfur assimilation pathway. APS synthesis involves the formation of a high-energy phosphoric-sulfuric acid anhydride bond driven by GTP hydrolysis by CysN coupled to ATP hydrolysis by CysD. The chain is Sulfate adenylyltransferase subunit 2 from Psychromonas ingrahamii (strain DSM 17664 / CCUG 51855 / 37).